The chain runs to 349 residues: MQRIETRKVKVGSVYVGGDSRVTVQSMTNTDTRDSKKTIEQIKKLEIAGCDIVRCAVPDFDAASSLSEITKNVKLPVVADIHFDYRLALEAIKNGVSALRINPGNIGSKERVELVAKSAKEKNIPIRIGVNSGSLEKDILNKYKRVCSEALVESALNHVKILEDVNFNDIVISIKSSNVQMMIDSYRLISKEVNYPLHLGVTEAGTIWRGTIKSSIGIGTLLSEGIGDTIRVSLTGDPVEEVKVGREILKTFGYLKSGVEFISCPTCGRTSIDLIKIANEVEKRLEKTNKSIKVAVMGCVVNGPGEAREADIGIAGGKGEGLIFKKGEIIKKVKEENLVDELMREIDNM.

[4Fe-4S] cluster contacts are provided by Cys264, Cys267, Cys299, and Glu306.

Belongs to the IspG family. It depends on [4Fe-4S] cluster as a cofactor.

It carries out the reaction (2E)-4-hydroxy-3-methylbut-2-enyl diphosphate + oxidized [flavodoxin] + H2O + 2 H(+) = 2-C-methyl-D-erythritol 2,4-cyclic diphosphate + reduced [flavodoxin]. It functions in the pathway isoprenoid biosynthesis; isopentenyl diphosphate biosynthesis via DXP pathway; isopentenyl diphosphate from 1-deoxy-D-xylulose 5-phosphate: step 5/6. Its function is as follows. Converts 2C-methyl-D-erythritol 2,4-cyclodiphosphate (ME-2,4cPP) into 1-hydroxy-2-methyl-2-(E)-butenyl 4-diphosphate. The polypeptide is 4-hydroxy-3-methylbut-2-en-1-yl diphosphate synthase (flavodoxin) (Clostridium acetobutylicum (strain ATCC 824 / DSM 792 / JCM 1419 / IAM 19013 / LMG 5710 / NBRC 13948 / NRRL B-527 / VKM B-1787 / 2291 / W)).